We begin with the raw amino-acid sequence, 222 residues long: Peptide methionine sulfoxide reductase MsrA (222 aa).

C60 is an active-site residue.

Belongs to the MsrA Met sulfoxide reductase family.

It catalyses the reaction L-methionyl-[protein] + [thioredoxin]-disulfide + H2O = L-methionyl-(S)-S-oxide-[protein] + [thioredoxin]-dithiol. The catalysed reaction is [thioredoxin]-disulfide + L-methionine + H2O = L-methionine (S)-S-oxide + [thioredoxin]-dithiol. Functionally, has an important function as a repair enzyme for proteins that have been inactivated by oxidation. Catalyzes the reversible oxidation-reduction of methionine sulfoxide in proteins to methionine. The protein is Peptide methionine sulfoxide reductase MsrA of Pseudomonas entomophila (strain L48).